The sequence spans 388 residues: Succinate--CoA ligase [ADP-forming] subunit beta (388 aa).

The ATP-grasp domain occupies 9 to 244; it reads KEILRKFGVA…LDEEDPAEIE (236 aa). Residues Lys46, 53–55, Glu99, Ala102, and Glu107 contribute to the ATP site; that span reads GRG. 2 residues coordinate Mg(2+): Asn199 and Asp213. Substrate-binding positions include Asn264 and 321–323; that span reads GIM.

Belongs to the succinate/malate CoA ligase beta subunit family. Heterotetramer of two alpha and two beta subunits. Requires Mg(2+) as cofactor.

It catalyses the reaction succinate + ATP + CoA = succinyl-CoA + ADP + phosphate. It carries out the reaction GTP + succinate + CoA = succinyl-CoA + GDP + phosphate. It functions in the pathway carbohydrate metabolism; tricarboxylic acid cycle; succinate from succinyl-CoA (ligase route): step 1/1. In terms of biological role, succinyl-CoA synthetase functions in the citric acid cycle (TCA), coupling the hydrolysis of succinyl-CoA to the synthesis of either ATP or GTP and thus represents the only step of substrate-level phosphorylation in the TCA. The beta subunit provides nucleotide specificity of the enzyme and binds the substrate succinate, while the binding sites for coenzyme A and phosphate are found in the alpha subunit. This is Succinate--CoA ligase [ADP-forming] subunit beta from Burkholderia vietnamiensis (strain G4 / LMG 22486) (Burkholderia cepacia (strain R1808)).